Reading from the N-terminus, the 218-residue chain is Protein P9 (218 aa).

Its subcellular location is the virion membrane. This Pseudoalteromonas espejiana (Bacteriophage PM2) protein is Protein P9 (IX).